The primary structure comprises 220 residues: MELYLDTSDVVAVKALSRIFPLAGVTTNPSIIAAGKKPLDVVLPQLHEAMGGQGRLFAQVMATTAEGMVNDALKLRSIIADIVVKVPVTAEGLAAIKMLKAEGIPTLGTAVYGAAQGLLSALAGAEYVAPYVNRIDAQGGSGIQTVTDLHQLLKMHAPQAKVLAASFKTPRQALDCLLAGCESITLPLDVAQQMISYPAVDAAVAKFEQDWQGAFGRTSI.

Lys-85 functions as the Schiff-base intermediate with substrate in the catalytic mechanism.

It belongs to the transaldolase family. Type 3A subfamily. In terms of assembly, homodecamer. Five subunits are arranged as a pentamer, and two ring-like pentamers pack like a donut to form the decamer.

Its subcellular location is the cytoplasm. The enzyme catalyses beta-D-fructose 6-phosphate = dihydroxyacetone + D-glyceraldehyde 3-phosphate. Its activity is regulated as follows. Inhibited by glycerol, inorganic phosphate and arabinose 5-phosphate. In terms of biological role, catalyzes the reversible formation of fructose 6-phosphate from dihydroxyacetone (DHA) and D-glyceraldehyde 3-phosphate via an aldolization reaction. Can utilize several aldehydes as acceptor compounds in vitro, and hydroxyacetone (HA) or 1-hydroxy-butan-2-one as alternative donor substrate. Is also able to catalyze the direct stereoselective self-aldol addition of glycolaldehyde to furnish D-(-)-threose, and cross-aldol reactions of glycolaldehyde to other aldehyde acceptors. Is not able to cleave fructose, fructose 1-phosphate, glucose 6-phosphate, sedoheptulose 1,7-bisphosphate, xylulose 5-phosphate, ribulose 5-phosphate, and fructose 1,6-bisphosphate; cannot use dihydroxyacetone phosphate as donor compound nor D-glyceraldehyde as acceptor. Does not display transaldolase activity. The polypeptide is Fructose-6-phosphate aldolase 1 (fsaA) (Escherichia coli (strain K12)).